The following is a 697-amino-acid chain: Phenylalanine--tRNA ligase beta subunit, chloroplastic (697 aa).

In terms of domain architecture, B5 spans 283-368 (NISRILFIDK…RIYGFDNFIS (86 aa)). Aspartate 346, aspartate 352, glutamate 355, and glutamate 356 together coordinate Mg(2+). In terms of domain architecture, FDX-ACB spans 609–697 (SSYPSLTRDI…IDDLLNEYKL (89 aa)).

This sequence belongs to the phenylalanyl-tRNA synthetase beta subunit family. Type 1 subfamily. Tetramer of two alpha and two beta subunits. Mg(2+) is required as a cofactor.

The protein resides in the plastid. Its subcellular location is the chloroplast. The enzyme catalyses tRNA(Phe) + L-phenylalanine + ATP = L-phenylalanyl-tRNA(Phe) + AMP + diphosphate + H(+). The sequence is that of Phenylalanine--tRNA ligase beta subunit, chloroplastic from Gracilaria tenuistipitata var. liui (Red alga).